Reading from the N-terminus, the 472-residue chain is MGSKVMMFKWSKNITPSQVIKLMRAEKDVEKSMAVFDSATAEYANGYVHDQSSFGYMVLRLVSANKFKAAEDLIVRMKIENCVVSEDILLSICRGYGRVHRPFDSLRVFHKMKDFDCDPSQKAYVTVLAILVEENQLNLAFKFYKNMREIGLPPTVASLNVLIKALCRNDGTVDAGLKIFLEMPKRGCDPDSYTYGTLISGLCRFGRIDEAKKLFTEMVEKDCAPTVVTYTSLINGLCGSKNVDEAMRYLEEMKSKGIEPNVFTYSSLMDGLCKDGRSLQAMELFEMMMARGCRPNMVTYTTLITGLCKEQKIQEAVELLDRMNLQGLKPDAGLYGKVISGFCAISKFREAANFLDEMILGGITPNRLTWNIHVKTSNEVVRGLCANYPSRAFTLYLSMRSRGISVEVETLESLVKCLCKKGEFQKAVQLVDEIVTDGCIPSKGTWKLLIGHTLDKTIVGEASDTLLRDLDI.

PPR repeat units follow at residues 50–84 (DQSSFGYMVLRLVSANKFKAAEDLIVRMKIENCVV), 85–119 (SEDILLSICRGYGRVHRPFDSLRVFHKMKDFDCDP), 120–154 (SQKAYVTVLAILVEENQLNLAFKFYKNMREIGLPP), 155–190 (TVASLNVLIKALCRNDGTVDAGLKIFLEMPKRGCDP), 191–225 (DSYTYGTLISGLCRFGRIDEAKKLFTEMVEKDCAP), 226–260 (TVVTYTSLINGLCGSKNVDEAMRYLEEMKSKGIEP), 261–295 (NVFTYSSLMDGLCKDGRSLQAMELFEMMMARGCRP), 296–330 (NMVTYTTLITGLCKEQKIQEAVELLDRMNLQGLKP), 331–365 (DAGLYGKVISGFCAISKFREAANFLDEMILGGITP), 373–406 (HVKTSNEVVRGLCANYPSRAFTLYLSMRSRGISV), and 407–441 (EVETLESLVKCLCKKGEFQKAVQLVDEIVTDGCIP).

It belongs to the PPR family. P subfamily.

This is Pentatricopeptide repeat-containing protein At5g46100 from Arabidopsis thaliana (Mouse-ear cress).